The chain runs to 161 residues: Probable ubiquitin-conjugating enzyme E2 16 (161 aa).

One can recognise a UBC core domain in the interval 15–161 (IATNRLQKEL…TRWWFHDDKV (147 aa)). Catalysis depends on cysteine 99, which acts as the Glycyl thioester intermediate.

The protein belongs to the ubiquitin-conjugating enzyme family.

It carries out the reaction S-ubiquitinyl-[E1 ubiquitin-activating enzyme]-L-cysteine + [E2 ubiquitin-conjugating enzyme]-L-cysteine = [E1 ubiquitin-activating enzyme]-L-cysteine + S-ubiquitinyl-[E2 ubiquitin-conjugating enzyme]-L-cysteine.. It functions in the pathway protein modification; protein ubiquitination. Its function is as follows. Accepts the ubiquitin from the E1 complex and catalyzes its covalent attachment to other proteins. The chain is Probable ubiquitin-conjugating enzyme E2 16 (UBC16) from Arabidopsis thaliana (Mouse-ear cress).